Reading from the N-terminus, the 128-residue chain is UPF0325 protein YaeH (128 aa).

This sequence belongs to the UPF0325 family.

This is UPF0325 protein YaeH from Salmonella agona (strain SL483).